The primary structure comprises 66 residues: Large ribosomal subunit protein bL35 (66 aa).

It belongs to the bacterial ribosomal protein bL35 family.

The chain is Large ribosomal subunit protein bL35 from Methylobacterium nodulans (strain LMG 21967 / CNCM I-2342 / ORS 2060).